We begin with the raw amino-acid sequence, 357 residues long: tRNA/tmRNA (uracil-C(5))-methyltransferase (357 aa).

S-adenosyl-L-methionine contacts are provided by Gln-180, Tyr-209, Asn-214, Glu-230, and Asp-290. Catalysis depends on Cys-315, which acts as the Nucleophile. Glu-349 functions as the Proton acceptor in the catalytic mechanism.

This sequence belongs to the class I-like SAM-binding methyltransferase superfamily. RNA M5U methyltransferase family. TrmA subfamily.

The enzyme catalyses uridine(54) in tRNA + S-adenosyl-L-methionine = 5-methyluridine(54) in tRNA + S-adenosyl-L-homocysteine + H(+). The catalysed reaction is uridine(341) in tmRNA + S-adenosyl-L-methionine = 5-methyluridine(341) in tmRNA + S-adenosyl-L-homocysteine + H(+). In terms of biological role, dual-specificity methyltransferase that catalyzes the formation of 5-methyluridine at position 54 (m5U54) in all tRNAs, and that of position 341 (m5U341) in tmRNA (transfer-mRNA). In Campylobacter jejuni (strain RM1221), this protein is tRNA/tmRNA (uracil-C(5))-methyltransferase.